The following is a 234-amino-acid chain: Fibronectin type III domain-containing protein 4 (234 aa).

An N-terminal signal peptide occupies residues Met-1–Ala-44. At Asp-45–Thr-167 the chain is on the extracellular side. Positions Pro-47–Gly-140 constitute a Fibronectin type-III domain. N-linked (GlcNAc...) asparagine glycans are attached at residues Asn-52, Asn-97, and Asn-147. The segment at Gly-122–Asp-160 is disordered. A helical membrane pass occupies residues Gly-168–Cys-188. Topologically, residues Arg-189 to Val-234 are cytoplasmic. Positions Asn-197–Gly-209 are enriched in basic and acidic residues. The segment at Asn-197–Val-234 is disordered.

Highly expressed in the liver and the brain, including in the cortex, hypothalamus and hippocampus. Also expressed in adipose tissue.

It localises to the membrane. The protein resides in the secreted. In terms of biological role, has anti-inflammatory properties. In the colon, acts on macrophages to down-regulate inflammation. May suppress osteoclastogenesis and mature osteoclast resorptive function. In white adipose tissue, decreases local inflammation, via interaction with GPR116. Also required for proper systemic glucose tolerance, specifically sensitizing white adipocytes to insulin and promoting glucose uptake. The insulin sensitizing function in adipose tissue is mediated by interaction with ADGRF5/GPR116 and activation of cAMP signaling. The chain is Fibronectin type III domain-containing protein 4 (FNDC4) from Homo sapiens (Human).